The sequence spans 140 residues: Biopolymer transport protein exbD1 (140 aa).

Residues 1–16 (MAFSSGNSGGPMADIN) lie on the Cytoplasmic side of the membrane. The chain crosses the membrane as a helical span at residues 17 to 37 (VTPLVDVMLVLLIIFIITAPL). The Periplasmic segment spans residues 38-140 (MSHKVKVELP…GFVATKEKGQ (103 aa)).

This sequence belongs to the ExbD/TolR family. The accessory proteins ExbB and ExbD seem to form a complex with TonB.

The protein resides in the cell inner membrane. Involved in the TonB-dependent energy-dependent transport of various receptor-bound substrates. This is Biopolymer transport protein exbD1 (exbD1) from Xanthomonas campestris pv. campestris (strain B100).